The sequence spans 236 residues: Cancer/testis antigen 55 (236 aa).

The disordered stretch occupies residues 57–84; the sequence is RSSADVETGDNPLKAEPNLPAAVEEQSP.

Interacts with GABARAP; this interaction may be important for GABARAP protein stability. Interacts with LAMP2; this interaction may be important for LAMP2 protein stability. Expressed in spermatozoa (at protein level).

Its subcellular location is the cytoplasm. It is found in the cytoplasmic vesicle. The protein resides in the secretory vesicle. The protein localises to the acrosome. It localises to the cell projection. Its subcellular location is the cilium. It is found in the flagellum. Its function is as follows. Plays a role in spermatogenesis, possibly acting in the regulation of the autophagy pathway. The chain is Cancer/testis antigen 55 (Ct55) from Mus musculus (Mouse).